The chain runs to 94 residues: U27-theraphotoxin-Cg1a (94 aa).

Positions 1 to 22 are cleaved as a signal peptide; that stretch reads MIFLLPPVIFVMLLAESVLILG. The propeptide occupies 23 to 58; it reads DSEDADLMEMVQMSRPFFNPIIPAVEFVDLREERQR. Cystine bridges form between Cys60–Cys78, Cys67–Cys83, and Cys77–Cys88.

It belongs to the neurotoxin 14 (magi-1) family. OAIP-1 subfamily. As to expression, expressed by the venom gland.

Its subcellular location is the secreted. Its function is as follows. Probable ion channel inhibitor. The chain is U27-theraphotoxin-Cg1a from Chilobrachys guangxiensis (Chinese earth tiger tarantula).